Here is a 279-residue protein sequence, read N- to C-terminus: Tryptophan synthase alpha chain (279 aa).

Residues Glu-50 and Asp-61 each act as proton acceptor in the active site.

The protein belongs to the TrpA family. Tetramer of two alpha and two beta chains.

The catalysed reaction is (1S,2R)-1-C-(indol-3-yl)glycerol 3-phosphate + L-serine = D-glyceraldehyde 3-phosphate + L-tryptophan + H2O. The protein operates within amino-acid biosynthesis; L-tryptophan biosynthesis; L-tryptophan from chorismate: step 5/5. Its function is as follows. The alpha subunit is responsible for the aldol cleavage of indoleglycerol phosphate to indole and glyceraldehyde 3-phosphate. This Methylobacterium radiotolerans (strain ATCC 27329 / DSM 1819 / JCM 2831 / NBRC 15690 / NCIMB 10815 / 0-1) protein is Tryptophan synthase alpha chain.